We begin with the raw amino-acid sequence, 309 residues long: MELQFLGTGAGQPAKQRNVSSLALKLLDEINEVWMFDCGEGTQRQILETTIKPRKIRKIFITHLHGDHIFGLPGFLSSRSFQASEEQTDLDIYGPIGIKTYVLTSLKVSGARVPYQIHFHEFDDKSLGKIMETDKFVVYAERLAHTIFCMGYRVVQKDLEGTLDAEALKAAGVPFGPLFGKIKNGQDVELEDGRLICAKDYISAPKKGKIITIIGDTRKTSASVKLAKDADVLVHESTYGKGDERIARNHGHSTNMQAAQIAHEAGAKRLLLNHVSARFLGRDCRQMEKDAATIFENVKMVQDLEEVII.

7 residues coordinate Zn(2+): His63, His65, Asp67, His68, His145, Asp216, and His274. The active-site Proton acceptor is Asp67.

The protein belongs to the RNase Z family. Homodimer. The cofactor is Zn(2+).

The enzyme catalyses Endonucleolytic cleavage of RNA, removing extra 3' nucleotides from tRNA precursor, generating 3' termini of tRNAs. A 3'-hydroxy group is left at the tRNA terminus and a 5'-phosphoryl group is left at the trailer molecule.. In terms of biological role, zinc phosphodiesterase, which displays some tRNA 3'-processing endonuclease activity. Probably involved in tRNA maturation, by removing a 3'-trailer from precursor tRNA. The sequence is that of Ribonuclease Z from Streptococcus pyogenes serotype M6 (strain ATCC BAA-946 / MGAS10394).